Here is a 662-residue protein sequence, read N- to C-terminus: MSDLFSLNKEKKNKIVYTNYSAKDIEVLDGLEPVRKRPGMYIGGTDSNAMHHLVSEVLDNAMDEAVAGFASIIMIKMHQDHSITIFDNGRGIPIDNHPKFPDKSALEVILTTLHSGSKFSNNVYHTSGGLHGVGISVVNALSKHFKIKVYKQGKLYSQSYSKGAKLTDLISAEASKRLRGTSINFTPDPEIFSEKLHFNPKKIYEIARSKAYLYRGVSIEWECEVEVPSDIPKKALINFPNGLKDYLSSKISLDNLVIPEIFSGNIESTVDDIKLEWAICWQNNDTSAFMQSYCNTVPTPQGGTHEQGLKSAILRGLKAYSEMIGNKKAANLTIEDILETASIVLSIFIVEPSFQGQTKEKLVSNGVSKLVENIIKDHFDHFLSSDKVLATHLLEHVIAIAEFRRNKKNERNISRKSVTQKLRLPGKLADCTRTSAEGTELFIVEGDSAGGSAKQARNRETQAVLPLWGKVLNVASSTLEKIINNQAIQDLEIALACGSLKNYKKENLRYEKIIIMTDADVDGAHIASLLMTFFFLRMPKLVEEGHLYLAKPPLYRLTQSNKIYYACDEEEKIKLTYKLSKASKAKIEVGRFKGLGEMMPAQLKETTMHPEKRSLLKVTLEDVQNVDKIVDDLMGKKPEKRFQFIYEQALVKMDQIINKLDI.

Residues Tyr20, Asn60, Asp87, 129-135, and Lys359 each bind ATP; that span reads GLHGVGI. The 115-residue stretch at 439 to 553 folds into the Toprim domain; the sequence is TELFIVEGDS…EGHLYLAKPP (115 aa). Residues Glu445, Asp518, and Asp520 each coordinate Mg(2+).

Belongs to the type II topoisomerase family. ParE type 1 subfamily. As to quaternary structure, heterotetramer composed of ParC and ParE. It depends on Mg(2+) as a cofactor. Mn(2+) is required as a cofactor. The cofactor is Ca(2+).

The enzyme catalyses ATP-dependent breakage, passage and rejoining of double-stranded DNA.. In terms of biological role, topoisomerase IV is essential for chromosome segregation. It relaxes supercoiled DNA. Performs the decatenation events required during the replication of a circular DNA molecule. The protein is DNA topoisomerase 4 subunit B of Rickettsia prowazekii (strain Madrid E).